Reading from the N-terminus, the 140-residue chain is uncharacterized protein (140 aa).

The region spanning 4–127 (TLTHLALHVP…AGNYVEFSYG (124 aa)) is the VOC domain.

This is an uncharacterized protein from Pseudomonas aeruginosa (strain ATCC 15692 / DSM 22644 / CIP 104116 / JCM 14847 / LMG 12228 / 1C / PRS 101 / PAO1).